The following is a 119-amino-acid chain: MAKIKKGDLVQVITGAKQERGGDRGKQGKVLRVFPDTNRVLVEGINRVTKHSKVGQSQRGTKTGGIEVVEAPIHVSNVALVDPSTKKPTRVGFRLDTVEKDGATKTVRIRVSKATGKDI.

The protein belongs to the universal ribosomal protein uL24 family. In terms of assembly, part of the 50S ribosomal subunit.

Its function is as follows. One of two assembly initiator proteins, it binds directly to the 5'-end of the 23S rRNA, where it nucleates assembly of the 50S subunit. In terms of biological role, one of the proteins that surrounds the polypeptide exit tunnel on the outside of the subunit. This chain is Large ribosomal subunit protein uL24, found in Paenarthrobacter aurescens (strain TC1).